A 589-amino-acid polypeptide reads, in one-letter code: Chromodomain Y-like protein (589 aa).

Residues M1–T10 are compositionally biased toward polar residues. Positions M1–V57 are disordered. The segment covering K11–R30 has biased composition (basic and acidic residues). The 61-residue stretch at T55–T115 folds into the Chromo domain. Residues T55–T300 are interaction with EZH2. S82 is subject to Phosphoserine. A disordered region spans residues R110–S155. Over residues A117–R128 the composition is skewed to low complexity. K129 carries the post-translational modification N6,N6,N6-trimethyllysine; by EHMT2; alternate. N6,N6-dimethyllysine; by EHMT2; alternate is present on K129. K129 is modified (N6-methyllysine; by EHMT2; alternate). Over residues S132 to N143 the composition is skewed to polar residues. 3 positions are modified to phosphoserine: S164, S195, and S210. The interval S202 to P224 is disordered. The segment covering F206 to Q216 has biased composition (basic and acidic residues). The interval S353–K585 is acetyl-CoA-binding domain.

Forms multimers and multimerization is required for stable binding to chromatin. Interacts with HDAC1 and HDAC2 via its C-terminal acetyl-CoA-binding domain. Interacts with EZH2, EED, SUZ12, REST, EHMT1 and EHMT2. Part of a complex containing at least CDYL, REST, WIZ, SETB1, EHMT1 and EHMT2. Part of a complex containing at least CDYL, MIER1, MIER2, HDAC1 and HDAC2. Interacts with CHAF1A and CHAF1B; bridging the CAF-1 complex to the MCM2-7 (MCM) complex. Interacts with MCM3 and MCM5; bridging the CAF-1 complex to the MCM2-7 (MCM) complex. Recruited to Xist RNA-coated X chromosome. Interacts with EHMT2 and PRDM9; interaction only takes place when PRDM9 is bound to hotspot DNA. In terms of tissue distribution, expressed in the brain, with expression in the hippocampal dentate gyrus, CA1, striatum and cortex (at protein level). Expressed in the prelimbic cortex.

It is found in the nucleus. Its subcellular location is the chromosome. The enzyme catalyses 3-hydroxybutanoyl-CoA = (2E)-butenoyl-CoA + H2O. In terms of biological role, chromatin reader protein that recognizes and binds histone H3 trimethylated at 'Lys-9', dimethylated at 'Lys-27' and trimethylated at 'Lys-27' (H3K9me3, H3K27me2 and H3K27me3, respectively). Part of multimeric repressive chromatin complexes, where it is required for transmission and restoration of repressive histone marks, thereby preserving the epigenetic landscape. Required for chromatin targeting and maximal enzymatic activity of Polycomb repressive complex 2 (PRC2); acts as a positive regulator of PRC2 activity by bridging the pre-existing histone H3K27me3 and newly recruited PRC2 on neighboring nucleosomes. Acts as a corepressor for REST by facilitating histone-lysine N-methyltransferase EHMT2 recruitment and H3K9 dimethylation at REST target genes for repression. Involved in X chromosome inactivation in females: recruited to Xist RNA-coated X chromosome and facilitates propagation of H3K9me2 by anchoring EHMT2. Promotes EZH2 accumulation and H3K27me3 methylation at DNA double strand breaks (DSBs), thereby facilitating transcriptional repression at sites of DNA damage and homology-directed repair of DSBs. Required for neuronal migration during brain development by repressing expression of RHOA. By repressing the expression of SCN8A, contributes to the inhibition of intrinsic neuronal excitability and epileptogenesis. In addition to acting as a chromatin reader, acts as a hydro-lyase. Shows crotonyl-coA hydratase activity by mediating the conversion of crotonyl-CoA ((2E)-butenoyl-CoA) to beta-hydroxybutyryl-CoA (3-hydroxybutanoyl-CoA), thereby acting as a negative regulator of histone crotonylation. Histone crotonylation is required during spermatogenesis; down-regulation of histone crotonylation by CDYL regulates the reactivation of sex chromosome-linked genes in round spermatids and histone replacement in elongating spermatids. By regulating histone crotonylation and trimethylation of H3K27, may be involved in stress-induced depression-like behaviors, possibly by regulating VGF expression. Displays acetyltransferase activity toward tubulin in vitro; such activity is however unsure in vivo and additional evidences would be required to confirm this result. Functionally, not able to recognize and bind histone H3K9me3, histone H3K27me2 and histone H3K27me3, due to the presence of a N-terminal extension that inactivates the chromo domain. This Rattus norvegicus (Rat) protein is Chromodomain Y-like protein.